A 206-amino-acid polypeptide reads, in one-letter code: MRPLTPRQAEILELIKRNIAETGMPPTRAEIATRLGFKSANAAEEHLKALAKKGCIEIMPGTSRGIRLPVEEEDNSETGLPLIGQVAAGEPILAQEHVEQYYQVDPSMFHPSADFLLRVKGDSMKNIGILEGDLLAVHKVQQARNGQVVVARVDDDVTVKRFEKKGNLVYLHAENEDYSPIKVDLSFQSLTIEGLAVGVIRNGDWL.

Residues 28 to 48 constitute a DNA-binding region (H-T-H motif); sequence RAEIATRLGFKSANAAEEHLK. Residues Ser123 and Lys160 each act as for autocatalytic cleavage activity in the active site.

The protein belongs to the peptidase S24 family. Homodimer.

The catalysed reaction is Hydrolysis of Ala-|-Gly bond in repressor LexA.. Functionally, represses a number of genes involved in the response to DNA damage (SOS response), including recA and lexA. In the presence of single-stranded DNA, RecA interacts with LexA causing an autocatalytic cleavage which disrupts the DNA-binding part of LexA, leading to derepression of the SOS regulon and eventually DNA repair. The chain is LexA repressor from Shewanella sp. (strain MR-7).